Consider the following 320-residue polypeptide: MKFLFYLSADNLEIARKEVLVLAERYGWVEDYQFEERLLLLDYAGEKFFERLAYTNEVTKIYDICSVSELEQVFSEIPVYDRLCCVRVKGGKGKTALERKLGALLWKRGAKVSVSNPEIVYKVYIQDDKCYVGLLEFERDTRQFFLRRPDRRPFLMPSAIKPKLARALVNLTGVLEGETLLDPMCGTGSFLIEAGLMGINPIGIDFIEKIVRGCRVNLEYYGIEGSVLLGDAKNLPLRDESVRGIATDYPYLRSTKAAGTLDELYSKTSEEFERVLKKGGRAAIVTNIDVESFFSNFEIEMKTEERVHGSLTRRIYLLRR.

One can recognise a THUMP domain in the interval 46–136; that stretch reads EKFFERLAYT…DDKCYVGLLE (91 aa).

It belongs to the methyltransferase superfamily. Trm-G10 family. As to quaternary structure, monomer.

It is found in the cytoplasm. The enzyme catalyses guanosine(10) in tRNA + 2 S-adenosyl-L-methionine = N(2)-dimethylguanosine(10) in tRNA + 2 S-adenosyl-L-homocysteine + 2 H(+). Catalyzes the adenosylmethionine-dependent methylation of the exocyclic amino group (N(2)) of guanosine at position 10 of various tRNAs. Acts via a two-step process that leads to the formation of either N(2)-monomethyl (m(2)G) or N(2)-dimethylguanosine (m(2)(2)G). This is tRNA (guanine(10)-N2)-dimethyltransferase (trmG10) from Archaeoglobus fulgidus (strain ATCC 49558 / DSM 4304 / JCM 9628 / NBRC 100126 / VC-16).